A 500-amino-acid chain; its full sequence is Glycerol kinase (500 aa).

Position 13 (T13) interacts with ADP. ATP is bound by residues T13, T14, and S15. T13 serves as a coordination point for sn-glycerol 3-phosphate. Position 17 (R17) interacts with ADP. Positions 83, 84, 135, and 244 each coordinate sn-glycerol 3-phosphate. The glycerol site is built by R83, E84, Y135, D244, and Q245. Residues T266, G309, G410, and N414 each contribute to the ADP site. Residues T266, G309, and G410 each contribute to the ATP site.

The protein belongs to the FGGY kinase family.

It carries out the reaction glycerol + ATP = sn-glycerol 3-phosphate + ADP + H(+). It functions in the pathway polyol metabolism; glycerol degradation via glycerol kinase pathway; sn-glycerol 3-phosphate from glycerol: step 1/1. With respect to regulation, inhibited by fructose 1,6-bisphosphate (FBP). Functionally, key enzyme in the regulation of glycerol uptake and metabolism. Catalyzes the phosphorylation of glycerol to yield sn-glycerol 3-phosphate. The protein is Glycerol kinase of Chromobacterium violaceum (strain ATCC 12472 / DSM 30191 / JCM 1249 / CCUG 213 / NBRC 12614 / NCIMB 9131 / NCTC 9757 / MK).